The sequence spans 153 residues: Insulin-like growth factor 1 (153 aa).

A b region spans residues 49-77 (GPETLCGAELVDALQFVCGPRGFYFNKPT). Intrachain disulfides connect Cys54/Cys96, Cys66/Cys109, and Cys95/Cys100. The tract at residues 78–89 (GYGSSIRRAPQT) is c. The segment at 90-110 (GIVDECCFRSCDLRRLEMYCA) is a. Positions 111 to 118 (PLKPTKAA) are d. Residues 119-153 (RSIRAQRHTDMPKTQKEVHLKNTSRGSAGNKTYRM) constitute a propeptide, e peptide. The interval 120–153 (SIRAQRHTDMPKTQKEVHLKNTSRGSAGNKTYRM) is disordered. Residues 125–138 (RHTDMPKTQKEVHL) are compositionally biased toward basic and acidic residues. The span at 139 to 153 (KNTSRGSAGNKTYRM) shows a compositional bias: polar residues.

It belongs to the insulin family. In terms of assembly, forms a ternary complex with IGFR1 and ITGAV:ITGB3. Forms a ternary complex with IGFR1 and ITGA6:ITGB4. Interacts with SH2D3C isoform 2. Forms a ternary complex with IGFBP3 and ALS.

The protein resides in the secreted. Its function is as follows. The insulin-like growth factors, isolated from plasma, are structurally and functionally related to insulin but have a much higher growth-promoting activity. May be a physiological regulator of [1-14C]-2-deoxy-D-glucose (2DG) transport and glycogen synthesis in osteoblasts. Stimulates glucose transport in bone-derived osteoblastic (PyMS) cells and is effective at much lower concentrations than insulin, not only regarding glycogen and DNA synthesis but also with regard to enhancing glucose uptake. May play a role in synapse maturation. Ca(2+)-dependent exocytosis of IGF1 is required for sensory perception of smell in the olfactory bulb. Acts as a ligand for IGF1R. Binds to the alpha subunit of IGF1R, leading to the activation of the intrinsic tyrosine kinase activity which autophosphorylates tyrosine residues in the beta subunit thus initiating a cascade of down-stream signaling events leading to activation of the PI3K-AKT/PKB and the Ras-MAPK pathways. Binds to integrins ITGAV:ITGB3 and ITGA6:ITGB4. Its binding to integrins and subsequent ternary complex formation with integrins and IGFR1 are essential for IGF1 signaling. Induces the phosphorylation and activation of IGFR1, MAPK3/ERK1, MAPK1/ERK2 and AKT1. As part of the MAPK/ERK signaling pathway, acts as a negative regulator of apoptosis in cardiomyocytes via promotion of STUB1/CHIP-mediated ubiquitination and degradation of ICER-type isoforms of CREM. The protein is Insulin-like growth factor 1 of Mus musculus (Mouse).